We begin with the raw amino-acid sequence, 341 residues long: Tetraacyldisaccharide 4'-kinase (341 aa).

Residue 54–61 participates in ATP binding; the sequence is TVGGAGKT.

It belongs to the LpxK family.

The catalysed reaction is a lipid A disaccharide + ATP = a lipid IVA + ADP + H(+). The protein operates within glycolipid biosynthesis; lipid IV(A) biosynthesis; lipid IV(A) from (3R)-3-hydroxytetradecanoyl-[acyl-carrier-protein] and UDP-N-acetyl-alpha-D-glucosamine: step 6/6. Functionally, transfers the gamma-phosphate of ATP to the 4'-position of a tetraacyldisaccharide 1-phosphate intermediate (termed DS-1-P) to form tetraacyldisaccharide 1,4'-bis-phosphate (lipid IVA). The polypeptide is Tetraacyldisaccharide 4'-kinase (Brucella suis (strain ATCC 23445 / NCTC 10510)).